A 526-amino-acid chain; its full sequence is GMP synthase [glutamine-hydrolyzing] (526 aa).

In terms of domain architecture, Glutamine amidotransferase type-1 spans 3-199 (RVAIIDFGSQ…FVRIAGCDNN (197 aa)). The Nucleophile role is filled by Cys-83. Catalysis depends on residues His-174 and Glu-176. A GMPS ATP-PPase domain is found at 200–392 (WTVESFLDEQ…LGISDEILMR (193 aa)). Position 227-233 (227-233 (SGGVDSS)) interacts with ATP.

In terms of assembly, homodimer.

The catalysed reaction is XMP + L-glutamine + ATP + H2O = GMP + L-glutamate + AMP + diphosphate + 2 H(+). The protein operates within purine metabolism; GMP biosynthesis; GMP from XMP (L-Gln route): step 1/1. Its function is as follows. Catalyzes the synthesis of GMP from XMP. In Ehrlichia chaffeensis (strain ATCC CRL-10679 / Arkansas), this protein is GMP synthase [glutamine-hydrolyzing].